Reading from the N-terminus, the 810-residue chain is Phospholipase D alpha 1 (810 aa).

A C2 domain is found at 1–126; it reads MAQHLLHGTL…INGEEVDQWV (126 aa). Aspartate 187 is a binding site for Ca(2+). In terms of domain architecture, PLD phosphodiesterase 1 spans 327-366; it reads TMFTHHQKIVVVDSEMPSRGGSEMRRIVSFVGGIDLCDGR. Catalysis depends on residues histidine 332, lysine 334, and aspartate 339. Histidine 332 serves as a coordination point for a 1,2-diacyl-sn-glycero-3-phosphate. Ca(2+) contacts are provided by histidine 372 and histidine 406. Residues glutamine 522 and histidine 661 each contribute to the a 1,2-diacyl-sn-glycero-3-phosphate site. In terms of domain architecture, PLD phosphodiesterase 2 spans 656-683; that stretch reads FMIYVHTKMMIVDDEYIIIGSANINQRS. Active-site residues include histidine 661, lysine 663, and aspartate 668. Ca(2+) is bound at residue glutamate 722.

The protein belongs to the phospholipase D family. C2-PLD subfamily. In terms of assembly, interacts with GPA1. This binding inhibits PLDALPHA1 activity and is relieved by GTP. Requires Ca(2+) as cofactor. Highly expressed in roots, stems and flowers, moderately in leaves, seedlings and siliques. Not detected in seeds.

The protein localises to the cytoplasm. The protein resides in the cell membrane. Its subcellular location is the mitochondrion membrane. It is found in the microsome membrane. It localises to the vacuole. The protein localises to the cytoplasmic vesicle. The protein resides in the clathrin-coated vesicle. The enzyme catalyses a 1,2-diacyl-sn-glycero-3-phosphocholine + H2O = a 1,2-diacyl-sn-glycero-3-phosphate + choline + H(+). With respect to regulation, not inhibited by neomycin. Hydrolyzes glycerol-phospholipids at the terminal phosphodiesteric bond to generate phosphatidic acids (PA). Plays an important role in various cellular processes, including phytohormone action and response to stress, characterized by acidification of the cell. Involved in wound induction of jasmonic acid. May be involved in membrane lipid remodeling. Probably involved in freezing tolerance by modulating the cold-responsive genes and accumulation of osmolytes. Can use phosphatidylcholine (PC), phosphatidylethanolamine (PE) and phosphatidylglycerol (PG) as substrates, both in presence or in absence of PIP2. Its main substrate is phosphatidylcholine. Stimulates the intrinsic GTPase activity of GPA1 upon binding. Mediates the abscisic acid effects on stomata through interaction with GPA1 and the production of phosphatidic acid that bind to ABI1. Involved in seed aging and deterioration. Involved in microtubule stabilization and salt tolerance. Involved in abscisic acid-induced stomatal closure. The polypeptide is Phospholipase D alpha 1 (Arabidopsis thaliana (Mouse-ear cress)).